A 141-amino-acid chain; its full sequence is Small ribosomal subunit protein uS12 (141 aa).

At D89 the chain carries 3-methylthioaspartic acid. Positions 104–141 are disordered; it reads ASGAVGPSNTNKLNRNVSRSKYGVKRPKAGAKPASKAK. Residues 110-122 show a composition bias toward polar residues; the sequence is PSNTNKLNRNVSR. The segment covering 125–141 has biased composition (basic residues); sequence YGVKRPKAGAKPASKAK.

Belongs to the universal ribosomal protein uS12 family. In terms of assembly, part of the 30S ribosomal subunit. Contacts proteins S8 and S17. May interact with IF1 in the 30S initiation complex.

Its function is as follows. With S4 and S5 plays an important role in translational accuracy. Functionally, interacts with and stabilizes bases of the 16S rRNA that are involved in tRNA selection in the A site and with the mRNA backbone. Located at the interface of the 30S and 50S subunits, it traverses the body of the 30S subunit contacting proteins on the other side and probably holding the rRNA structure together. The combined cluster of proteins S8, S12 and S17 appears to hold together the shoulder and platform of the 30S subunit. The sequence is that of Small ribosomal subunit protein uS12 from Methylacidiphilum infernorum (isolate V4) (Methylokorus infernorum (strain V4)).